We begin with the raw amino-acid sequence, 470 residues long: MNPNQKIICISATGMTLSVVSLLIGIANLGLNIGLHYKVGDTPDANTPNVNETNSTTTIINNNTQNNFTNITNIIVSKNEERTFLNLTKPLCEVNSWHILSKDNAIRIGEDAHILVTREPYLSCDPQGCRMFALSQGTTLRGRHANGTIHDRSPFRALISWEMGQAPSPYNVRVECIGWSSTSCHDGISRMSICMSGPNNNASAVVWYGGRPVTEIPSWAGNILRTQESECVCHRGICPVVMTDGPANNRAATKIIYFKEGKIQKIEELAGNAQHIEECSCYGAVGMIKCICRDNWKGANRPVITIDSEMMTHTSKYLCSKVLTDTSRPNDPTNGDCDAPITGGSPDPGVKGFAFLDGENSWLGRTISKDSRSGYEMLKVPNAETDTRSEPTSHQVIINNQNWSGYSGAFIDYWANKECFNPCFYVELIRGRPKESSVLWTSNSIVALCGSRERLGSWSWHDGAEIIYFK.

The Intravirion portion of the chain corresponds to 1–6; sequence MNPNQK. A helical membrane pass occupies residues 7 to 27; that stretch reads IICISATGMTLSVVSLLIGIA. Residues 11–33 are involved in apical transport and lipid raft association; the sequence is SATGMTLSVVSLLIGIANLGLNI. The Virion surface portion of the chain corresponds to 28–470; that stretch reads NLGLNIGLHY…HDGAEIIYFK (443 aa). Residues 36–88 form a hypervariable stalk region region; that stretch reads HYKVGDTPDANTPNVNETNSTTTIINNNTQNNFTNITNIIVSKNEERTFLNLT. N-linked (GlcNAc...) asparagine; by host glycosylation is found at asparagine 51, asparagine 54, asparagine 62, asparagine 67, asparagine 70, and asparagine 86. Residues 91–470 are head of neuraminidase; the sequence is LCEVNSWHIL…HDGAEIIYFK (380 aa). Disulfide bonds link cysteine 92–cysteine 419, cysteine 124–cysteine 129, cysteine 184–cysteine 231, cysteine 233–cysteine 238, cysteine 279–cysteine 292, cysteine 281–cysteine 290, cysteine 319–cysteine 337, and cysteine 423–cysteine 449. Arginine 118 is a binding site for substrate. N-linked (GlcNAc...) asparagine; by host glycosylation is present at asparagine 146. The active-site Proton donor/acceptor is the aspartate 151. A substrate-binding site is contributed by arginine 152. N-linked (GlcNAc...) asparagine; by host glycosylation is present at asparagine 201. Position 277–278 (277–278) interacts with substrate; the sequence is EE. Arginine 293 is a substrate binding site. Residues aspartate 294, glycine 298, and aspartate 325 each coordinate Ca(2+). Arginine 372 lines the substrate pocket. N-linked (GlcNAc...) asparagine; by host glycosylation occurs at asparagine 402. Tyrosine 406 functions as the Nucleophile in the catalytic mechanism.

It belongs to the glycosyl hydrolase 34 family. As to quaternary structure, homotetramer. The cofactor is Ca(2+). In terms of processing, N-glycosylated.

It localises to the virion membrane. It is found in the host apical cell membrane. The enzyme catalyses Hydrolysis of alpha-(2-&gt;3)-, alpha-(2-&gt;6)-, alpha-(2-&gt;8)- glycosidic linkages of terminal sialic acid residues in oligosaccharides, glycoproteins, glycolipids, colominic acid and synthetic substrates.. Its activity is regulated as follows. Inhibited by the neuraminidase inhibitors zanamivir (Relenza) and oseltamivir (Tamiflu). These drugs interfere with the release of progeny virus from infected cells and are effective against all influenza strains. Resistance to neuraminidase inhibitors is quite rare. Its function is as follows. Catalyzes the removal of terminal sialic acid residues from viral and cellular glycoconjugates. Cleaves off the terminal sialic acids on the glycosylated HA during virus budding to facilitate virus release. Additionally helps virus spread through the circulation by further removing sialic acids from the cell surface. These cleavages prevent self-aggregation and ensure the efficient spread of the progeny virus from cell to cell. Otherwise, infection would be limited to one round of replication. Described as a receptor-destroying enzyme because it cleaves a terminal sialic acid from the cellular receptors. May facilitate viral invasion of the upper airways by cleaving the sialic acid moieties on the mucin of the airway epithelial cells. Likely to plays a role in the budding process through its association with lipid rafts during intracellular transport. May additionally display a raft-association independent effect on budding. Plays a role in the determination of host range restriction on replication and virulence. Sialidase activity in late endosome/lysosome traffic seems to enhance virus replication. The sequence is that of Neuraminidase from Influenza A virus (strain A/Budgerigar/Hokkaido/1/1977 H4N6).